We begin with the raw amino-acid sequence, 233 residues long: MAEETQNTVATESNNEDRKGRRGQRGEGRRGERRNRREENHGDELLDRVVTINRVSKTHKGGRTFSFAALVVVGDGNGTVGVGYGKSREVPAAIAKGQLDAKKHMFSVPRVRGTITHPVQGHDAAGTVLLRPAAPGTGVIAGGSVRAVMECAGITDVLTKSMGSATAVNVVRATVDALKQLEEPEEIAARRGLALDEVAPDALLRARAAGIAEARKAREEAAAAKAAEEKDGE.

Residues 1-13 (MAEETQNTVATES) are compositionally biased toward polar residues. The interval 1–40 (MAEETQNTVATESNNEDRKGRRGQRGEGRRGERRNRREEN) is disordered. Residues 15–40 (NEDRKGRRGQRGEGRRGERRNRREEN) show a composition bias toward basic and acidic residues. The region spanning 45-108 (LLDRVVTINR…LDAKKHMFSV (64 aa)) is the S5 DRBM domain.

It belongs to the universal ribosomal protein uS5 family. In terms of assembly, part of the 30S ribosomal subunit. Contacts proteins S4 and S8.

In terms of biological role, with S4 and S12 plays an important role in translational accuracy. Its function is as follows. Located at the back of the 30S subunit body where it stabilizes the conformation of the head with respect to the body. This chain is Small ribosomal subunit protein uS5, found in Bifidobacterium longum (strain NCC 2705).